A 252-amino-acid chain; its full sequence is Large ribosomal subunit protein uL4 (252 aa).

It belongs to the universal ribosomal protein uL4 family. As to quaternary structure, part of the 50S ribosomal subunit.

Functionally, one of the primary rRNA binding proteins, this protein initially binds near the 5'-end of the 23S rRNA. It is important during the early stages of 50S assembly. It makes multiple contacts with different domains of the 23S rRNA in the assembled 50S subunit and ribosome. In terms of biological role, forms part of the polypeptide exit tunnel. In Methanococcus maripaludis (strain DSM 14266 / JCM 13030 / NBRC 101832 / S2 / LL), this protein is Large ribosomal subunit protein uL4.